A 63-amino-acid polypeptide reads, in one-letter code: Large ribosomal subunit protein uL29 (63 aa).

Belongs to the universal ribosomal protein uL29 family.

This chain is Large ribosomal subunit protein uL29, found in Herminiimonas arsenicoxydans.